The sequence spans 427 residues: Adenylosuccinate synthetase (427 aa).

GTP is bound by residues 12–18 (GDEGKGK) and 40–42 (GHT). Residue aspartate 13 is the Proton acceptor of the active site. 2 residues coordinate Mg(2+): aspartate 13 and glycine 40. IMP-binding positions include 13 to 16 (DEGK), 38 to 41 (NAGH), threonine 128, arginine 142, glutamine 223, threonine 238, and arginine 302. The active-site Proton donor is histidine 41. Position 298–304 (298–304 (TTTGRPR)) interacts with substrate. GTP contacts are provided by residues arginine 304, 330–332 (SID), and 412–414 (SVG).

Belongs to the adenylosuccinate synthetase family. As to quaternary structure, homodimer. Mg(2+) serves as cofactor.

The protein resides in the cytoplasm. The enzyme catalyses IMP + L-aspartate + GTP = N(6)-(1,2-dicarboxyethyl)-AMP + GDP + phosphate + 2 H(+). It functions in the pathway purine metabolism; AMP biosynthesis via de novo pathway; AMP from IMP: step 1/2. Plays an important role in the de novo pathway of purine nucleotide biosynthesis. Catalyzes the first committed step in the biosynthesis of AMP from IMP. This is Adenylosuccinate synthetase from Staphylococcus epidermidis (strain ATCC 35984 / DSM 28319 / BCRC 17069 / CCUG 31568 / BM 3577 / RP62A).